The primary structure comprises 146 residues: Hemoglobin subunit beta (146 aa).

N-acetylvaline is present on Val-1. One can recognise a Globin domain in the interval 2–146; sequence HLSGEEKTAL…VANALAHKYH (145 aa). At Ser-44 the chain carries Phosphoserine. Lys-59 carries the N6-acetyllysine modification. His-63 is a binding site for heme b. N6-acetyllysine is present on Lys-82. Heme b is bound at residue His-92. Cys-93 carries the post-translational modification S-nitrosocysteine. Lys-144 is subject to N6-acetyllysine.

This sequence belongs to the globin family. In terms of assembly, heterotetramer of two alpha chains and two beta chains. As to expression, red blood cells.

Its function is as follows. Involved in oxygen transport from the lung to the various peripheral tissues. The chain is Hemoglobin subunit beta from Tamiasciurus hudsonicus (American red squirrel).